The following is an 82-amino-acid chain: Musculoskeletal embryonic nuclear protein 1 (82 aa).

Disordered regions lie at residues methionine 1–asparagine 33 and glutamine 49–glycine 82. A Phosphoserine modification is found at serine 2. Positions proline 10 to valine 18 match the Nuclear localization signal motif.

This sequence belongs to the MUSTN1 family. As to expression, expression in skeletal muscle is reduced during limb unloading but increases during the active recovery phase that follows.

The protein localises to the nucleus. The protein resides in the cytoplasm. It localises to the secreted. It is found in the extracellular space. Functionally, required for chondrocyte development and proliferation. Plays a role in myoblast differentiation and fusion. Modulates skeletal muscle extracellular matrix composition. Plays a role in skeletal muscle function. Plays a role in glucose homeostasis. The sequence is that of Musculoskeletal embryonic nuclear protein 1 (MUSTN1) from Homo sapiens (Human).